Here is a 255-residue protein sequence, read N- to C-terminus: Eukaryotic translation initiation factor 3 subunit J (255 aa).

2 stretches are compositionally biased toward acidic residues: residues 1-16 (MAENDSWDADDFEAED) and 34-53 (EGEDEEEDVKDNWDDEEEAQ). Positions 1-107 (MAENDSWDAD…SSNLPEITPE (107 aa)) are disordered. Basic and acidic residues predominate over residues 54-95 (DATKQEPQKTELKVPEKKKLQEKIKEKENLQKKRKEELKKQA). Residues 69-131 (EKKKLQEKIK…DSDLELAKEA (63 aa)) adopt a coiled-coil conformation.

Belongs to the eIF-3 subunit J family. As to quaternary structure, component of the eukaryotic translation initiation factor 3 (eIF-3) complex, which is composed of 13 subunits: eif3a, eif3b, eif3c, eif3d, eif3e, eif3f, eif3g, eif3h, eif3i, eif3j, eif3k, eif3l and eif3m.

It is found in the cytoplasm. Component of the eukaryotic translation initiation factor 3 (eIF-3) complex, which is involved in protein synthesis of a specialized repertoire of mRNAs and, together with other initiation factors, stimulates binding of mRNA and methionyl-tRNAi to the 40S ribosome. The eIF-3 complex specifically targets and initiates translation of a subset of mRNAs involved in cell proliferation. This Xenopus laevis (African clawed frog) protein is Eukaryotic translation initiation factor 3 subunit J (eif3j).